The chain runs to 304 residues: MSFINKYVIVVVGPTAAGKTALAVSLAKRFNTAVLSADSRQVFKELSIGTAKATMEEQDGVPHYFVDSISIEESFNAGMFEREGLQLLDTLFLKHDVVIVCGGTGLYVKALLEGMDALPQADPELREALNREFEQRGLEVMTGELKEIDPETHAVIDLKNPLRVFRAIEVYRQTGKPLSSFKTGAKQERPFKTIRIGLNMPREELYARIDRRMDRMLEAGLEKEARDNIQYRNYNALQTVGYSEIFGFIDGLYDREEMIRLLKRNSRRYAKRQLTWFSKDAEVKWFHPGEITEITTFIEAKLQE.

Residue 13 to 20 (GPTAAGKT) participates in ATP binding. 15–20 (TAAGKT) serves as a coordination point for substrate. Residues 38–41 (DSRQ) are interaction with substrate tRNA.

This sequence belongs to the IPP transferase family. In terms of assembly, monomer. It depends on Mg(2+) as a cofactor.

It catalyses the reaction adenosine(37) in tRNA + dimethylallyl diphosphate = N(6)-dimethylallyladenosine(37) in tRNA + diphosphate. Catalyzes the transfer of a dimethylallyl group onto the adenine at position 37 in tRNAs that read codons beginning with uridine, leading to the formation of N6-(dimethylallyl)adenosine (i(6)A). The sequence is that of tRNA dimethylallyltransferase from Cytophaga hutchinsonii (strain ATCC 33406 / DSM 1761 / CIP 103989 / NBRC 15051 / NCIMB 9469 / D465).